We begin with the raw amino-acid sequence, 399 residues long: Methylthioribose kinase (399 aa).

ATP is bound by residues Asn40, Lys57, and 111–113 (EDL). Asp229 serves as a coordination point for substrate. 246 to 248 (DAE) contributes to the ATP binding site. Arg344 contributes to the substrate binding site.

Belongs to the methylthioribose kinase family. In terms of assembly, homodimer.

It catalyses the reaction 5-(methylsulfanyl)-D-ribose + ATP = 5-(methylsulfanyl)-alpha-D-ribose 1-phosphate + ADP + H(+). Its pathway is amino-acid biosynthesis; L-methionine biosynthesis via salvage pathway; S-methyl-5-thio-alpha-D-ribose 1-phosphate from S-methyl-5'-thioadenosine (hydrolase route): step 2/2. Catalyzes the phosphorylation of methylthioribose into methylthioribose-1-phosphate. The polypeptide is Methylthioribose kinase (Cronobacter sakazakii (strain ATCC BAA-894) (Enterobacter sakazakii)).